Reading from the N-terminus, the 320-residue chain is Nucleotide-binding protein Acid_7395 (320 aa).

Residues 1-34 (MPLRKKGAATTKAAATRKDSAKAPASSKRKDAPQ) form a disordered region. Residue 44 to 51 (GLSGSGKG) participates in ATP binding. Residue 94-97 (DIRE) coordinates GTP.

This sequence belongs to the RapZ-like family.

Functionally, displays ATPase and GTPase activities. The chain is Nucleotide-binding protein Acid_7395 from Solibacter usitatus (strain Ellin6076).